The sequence spans 543 residues: Intermediate filament protein ifb-2 (543 aa).

The span at 1–10 (MSAVSYSMHR) shows a compositional bias: polar residues. A disordered region spans residues 1-27 (MSAVSYSMHRTTTTTSSSSHGGVSAGH). Residues 1–42 (MSAVSYSMHRTTTTTSSSSHGGVSAGHAAEEFVASAEREKQE) form a head region. Positions 39–388 (EKQEMQQLNS…KLVESEEGRF (350 aa)) constitute an IF rod domain. The interval 43-74 (MQQLNSRLEVYISRVRQLEDRNKELVIELDTL) is coil 1A. A linker 1 region spans residues 75 to 88 (RGSLGNDIGQIKFK). Positions 89 to 223 (FNDSLVKVRR…RIHSQEITEL (135 aa)) are coil 1B. The tract at residues 224–240 (RTLLAQAPADTREFFKN) is linker 12. The interval 241 to 387 (ELALAIREIK…RKLVESEEGR (147 aa)) is coil 2. The interval 388–542 (FTHVGQGVVV…SHIQTTVASS (155 aa)) is tail. Residues 420–538 (TRSSFKRHAK…IEKASHIQTT (119 aa)) enclose the LTD domain.

The protein belongs to the intermediate filament family. In terms of tissue distribution, expression is restricted to a discrete circumferential subapical layer within the intestinal terminal web (known as the 'endotube'); this layer joins directly to the apical junction complexes that connect adjacent gut cells.

The protein resides in the cytoplasm. In terms of biological role, cytoplasmic intermediate filaments provide mechanical strength to cells. Not essential protein. Component of the terminal web (organelle-depleted, intermediate filament-rich layer of cytoplasm that underlies the apical microvilli of polarized epithelial cells) in embryonic through to adult gut cells. Correct localization of filaments requires let-413. In Caenorhabditis elegans, this protein is Intermediate filament protein ifb-2 (ifb-2).